The primary structure comprises 321 residues: Ferredoxin--NADP reductase (321 aa).

The FAD site is built by Glu-33, Gln-41, Tyr-46, Val-86, Leu-119, Asp-277, and Ser-318.

This sequence belongs to the ferredoxin--NADP reductase type 2 family. As to quaternary structure, homodimer. FAD is required as a cofactor.

The enzyme catalyses 2 reduced [2Fe-2S]-[ferredoxin] + NADP(+) + H(+) = 2 oxidized [2Fe-2S]-[ferredoxin] + NADPH. The protein is Ferredoxin--NADP reductase of Lactococcus lactis subsp. lactis (strain IL1403) (Streptococcus lactis).